The chain runs to 511 residues: Putative thymidine phosphorylase (511 aa).

The protein belongs to the thymidine/pyrimidine-nucleoside phosphorylase family. Type 2 subfamily.

It catalyses the reaction thymidine + phosphate = 2-deoxy-alpha-D-ribose 1-phosphate + thymine. This is Putative thymidine phosphorylase from Polaromonas sp. (strain JS666 / ATCC BAA-500).